The chain runs to 408 residues: Multidrug resistance protein MdtG (408 aa).

10 helical membrane passes run 16 to 36, 58 to 78, 92 to 112, 115 to 135, 146 to 166, 173 to 193, 221 to 241, 256 to 276, 290 to 310, and 378 to 398; these read LIVA…VMPF, IVFS…GGLA, LGMG…QFLI, ALLG…ATQV, TLST…GLLA, PVFF…LFCI, ILSL…IAPI, VAFI…LSAP, ILIT…YVQT, and AVFL…WNSL.

Belongs to the major facilitator superfamily. DHA1 family. MdtG (TC 2.A.1.2.20) subfamily.

It is found in the cell inner membrane. Functionally, confers resistance to fosfomycin and deoxycholate. The sequence is that of Multidrug resistance protein MdtG from Escherichia coli (strain SMS-3-5 / SECEC).